The chain runs to 419 residues: GTPase Obg (419 aa).

The Obg domain occupies 1 to 156; sequence MRFVDYVSIE…FYLDLQLKVM (156 aa). The OBG-type G domain maps to 157 to 334; the sequence is ADIGLVGKPN…LGEKQKKLEI (178 aa). GTP-binding positions include 163–170, 188–192, 209–212, 278–281, and 315–317; these read GKPNAGKS, FTTLA, DLPG, NKCD, and NII. Residues Ser-170 and Thr-190 each contribute to the Mg(2+) site. The OCT domain maps to 342–419; that stretch reads IEFNLKAPFL…RIYEFEFHWN (78 aa).

Belongs to the TRAFAC class OBG-HflX-like GTPase superfamily. OBG GTPase family. Monomer. Mg(2+) serves as cofactor.

It is found in the cytoplasm. In terms of biological role, an essential GTPase which binds GTP, GDP and possibly (p)ppGpp with moderate affinity, with high nucleotide exchange rates and a fairly low GTP hydrolysis rate. Plays a role in control of the cell cycle, stress response, ribosome biogenesis and in those bacteria that undergo differentiation, in morphogenesis control. The polypeptide is GTPase Obg (Mesomycoplasma hyopneumoniae (strain J / ATCC 25934 / NCTC 10110) (Mycoplasma hyopneumoniae)).